Consider the following 229-residue polypeptide: Prolactin (229 aa).

The signal sequence occupies residues 1–30; the sequence is MSNRGASLKGLFLAVLLVSNTLLTKEGVTS. Disulfide bonds link C34-C41, C88-C204, and C221-C229.

It belongs to the somatotropin/prolactin family.

It is found in the secreted. This chain is Prolactin (PRL), found in Gallus gallus (Chicken).